Reading from the N-terminus, the 398-residue chain is Acetate kinase 1 (398 aa).

A Mg(2+)-binding site is contributed by Asn10. Position 17 (Lys17) interacts with ATP. Arg89 contributes to the substrate binding site. Asp146 serves as the catalytic Proton donor/acceptor. Residues 206 to 210 (HLGNG), 281 to 283 (DCR), and 329 to 333 (GIGEN) contribute to the ATP site. Glu384 contributes to the Mg(2+) binding site.

This sequence belongs to the acetokinase family. As to quaternary structure, homodimer. Requires Mg(2+) as cofactor. Mn(2+) serves as cofactor.

The protein localises to the cytoplasm. It carries out the reaction acetate + ATP = acetyl phosphate + ADP. The protein operates within metabolic intermediate biosynthesis; acetyl-CoA biosynthesis; acetyl-CoA from acetate: step 1/2. In terms of biological role, catalyzes the formation of acetyl phosphate from acetate and ATP. Can also catalyze the reverse reaction. This Neisseria meningitidis serogroup B (strain ATCC BAA-335 / MC58) protein is Acetate kinase 1.